The following is a 240-amino-acid chain: tRNA (guanine-N(7)-)-methyltransferase (240 aa).

The segment at 1-20 is disordered; it reads MTESHDTPITSDGEARPHRR. S-adenosyl-L-methionine contacts are provided by E70, E95, D122, and D145. D145 is a catalytic residue. Residues K149, D181, and 218–221 each bind substrate; that span reads TKFE.

The protein belongs to the class I-like SAM-binding methyltransferase superfamily. TrmB family.

The catalysed reaction is guanosine(46) in tRNA + S-adenosyl-L-methionine = N(7)-methylguanosine(46) in tRNA + S-adenosyl-L-homocysteine. Its pathway is tRNA modification; N(7)-methylguanine-tRNA biosynthesis. In terms of biological role, catalyzes the formation of N(7)-methylguanine at position 46 (m7G46) in tRNA. This Pseudomonas putida (strain ATCC 700007 / DSM 6899 / JCM 31910 / BCRC 17059 / LMG 24140 / F1) protein is tRNA (guanine-N(7)-)-methyltransferase.